The sequence spans 361 residues: G-protein coupled receptor 52 (361 aa).

The Extracellular portion of the chain corresponds to Met1–Thr44. 3 N-linked (GlcNAc...) asparagine glycosylation sites follow: Asn2, Asn13, and Asn20. The helical transmembrane segment at Ile45 to Phe65 threads the bilayer. At His66–Asp87 the chain is on the cytoplasmic side. The helical transmembrane segment at Leu88 to Ile108 threads the bilayer. At His109–Gln115 the chain is on the extracellular side. The cysteines at positions 114 and 193 are disulfide-linked. A helical transmembrane segment spans residues Val116 to Ser136. Residues Val137–Arg159 lie on the Cytoplasmic side of the membrane. Residues Ile160–Trp180 traverse the membrane as a helical segment. Topologically, residues Gly181–Ser200 are extracellular. A helical membrane pass occupies residues Ala201 to Phe221. At Thr222–Met265 the chain is on the cytoplasmic side. A helical membrane pass occupies residues Val266–Leu286. Over Leu287 to Pro296 the chain is Extracellular. A helical transmembrane segment spans residues Thr297 to Tyr317. Topologically, residues Ser318–Ile361 are cytoplasmic.

It belongs to the G-protein coupled receptor 1 family.

Its subcellular location is the cell membrane. Functionally, G- protein coupled receptor activated by antipsychotics reserpine leading to an increase in intracellular cAMP and its internalization. May play a role in locomotor activity through modulation of dopamine, NMDA and ADORA2A-induced locomotor activity. These behavioral changes are accompanied by modulation of the dopamine receptor signaling pathway in striatum. Modulates HTT level via cAMP-dependent but PKA independent mechanisms throught activation of RAB39B that translocates HTT to the endoplasmic reticulum, thus avoiding proteasome degradation. In Bos taurus (Bovine), this protein is G-protein coupled receptor 52.